The primary structure comprises 154 residues: Histone H2B.v3 (154 aa).

The span at 1 to 11 shows a compositional bias: basic residues; the sequence is MVFVKGQKKAT. Positions 1–48 are disordered; it reads MVFVKGQKKATKGSTQSGEEKTASTTPKVTKTPTEGGEKKRKKRKSDY. Positions 12–27 are enriched in polar residues; sequence KGSTQSGEEKTASTTP.

The protein belongs to the histone H2B family. The nucleosome is a histone octamer containing two molecules each of H2A, H2B, H3 and H4 assembled in one H3-H4 heterotetramer and two H2A-H2B heterodimers. The octamer wraps approximately 147 bp of DNA.

The protein localises to the nucleus. Its subcellular location is the chromosome. In terms of biological role, core component of nucleosome which plays a central role in DNA double strand break (DSB) repair. Nucleosomes wrap and compact DNA into chromatin, limiting DNA accessibility to the cellular machineries which require DNA as a template. Histones thereby play a central role in transcription regulation, DNA repair, DNA replication and chromosomal stability. DNA accessibility is regulated via a complex set of post-translational modifications of histones, also called histone code, and nucleosome remodeling. This chain is Histone H2B.v3 (H2Bv3), found in Dictyostelium discoideum (Social amoeba).